Here is an 86-residue protein sequence, read N- to C-terminus: Photosystem I reaction center subunit PsaK (86 aa).

The helical transmembrane segment at 15-34 (PWSTQVAMVMITCNLLAIVA) threads the bilayer.

It belongs to the PsaG/PsaK family.

Its subcellular location is the plastid. It is found in the chloroplast thylakoid membrane. In Pyropia yezoensis (Susabi-nori), this protein is Photosystem I reaction center subunit PsaK.